Consider the following 94-residue polypeptide: Co-chaperonin GroES (94 aa).

Belongs to the GroES chaperonin family. In terms of assembly, heptamer of 7 subunits arranged in a ring. Interacts with the chaperonin GroEL.

It is found in the cytoplasm. In terms of biological role, together with the chaperonin GroEL, plays an essential role in assisting protein folding. The GroEL-GroES system forms a nano-cage that allows encapsulation of the non-native substrate proteins and provides a physical environment optimized to promote and accelerate protein folding. GroES binds to the apical surface of the GroEL ring, thereby capping the opening of the GroEL channel. This is Co-chaperonin GroES from Clostridioides difficile (strain 630) (Peptoclostridium difficile).